Reading from the N-terminus, the 494-residue chain is Glycerol kinase (494 aa).

T13 serves as a coordination point for ADP. Positions 13, 14, and 15 each coordinate ATP. Residue T13 participates in sn-glycerol 3-phosphate binding. Residue R17 participates in ADP binding. 4 residues coordinate sn-glycerol 3-phosphate: R83, E84, Y135, and D244. The glycerol site is built by R83, E84, Y135, D244, and Q245. T266 and G309 together coordinate ADP. Residues T266, G309, Q313, and G410 each coordinate ATP. Positions 410 and 414 each coordinate ADP.

The protein belongs to the FGGY kinase family.

The catalysed reaction is glycerol + ATP = sn-glycerol 3-phosphate + ADP + H(+). The protein operates within polyol metabolism; glycerol degradation via glycerol kinase pathway; sn-glycerol 3-phosphate from glycerol: step 1/1. Inhibited by fructose 1,6-bisphosphate (FBP). In terms of biological role, key enzyme in the regulation of glycerol uptake and metabolism. Catalyzes the phosphorylation of glycerol to yield sn-glycerol 3-phosphate. This Shewanella sp. (strain MR-7) protein is Glycerol kinase.